The primary structure comprises 232 residues: MSKAVVVFSGGQDSTTCLIQALTQFDEVHAITFDYGQRHNEEIEVAKALASQLRIASHKVMDVSLLNELAISALTRDDIPVSHELMENGLPNTFVPGRNILFLTLAGIYAYQLGANSVITGVCETDFSGYPDCRDQFVRAMETALCLGMDKQINLLTPLMWLNKAETWALADKYHSLTLVKELTLTCYNGIIGQGCGDCPACHLRQKGLDDYLNHKPSVMASLEQKTHGKSA.

8–18 contributes to the ATP binding site; sequence FSGGQDSTTCL. The Zn(2+) site is built by cysteine 187, cysteine 196, cysteine 199, and cysteine 202.

This sequence belongs to the QueC family. Requires Zn(2+) as cofactor.

The catalysed reaction is 7-carboxy-7-deazaguanine + NH4(+) + ATP = 7-cyano-7-deazaguanine + ADP + phosphate + H2O + H(+). It functions in the pathway purine metabolism; 7-cyano-7-deazaguanine biosynthesis. Functionally, catalyzes the ATP-dependent conversion of 7-carboxy-7-deazaguanine (CDG) to 7-cyano-7-deazaguanine (preQ(0)). The polypeptide is 7-cyano-7-deazaguanine synthase (Shewanella denitrificans (strain OS217 / ATCC BAA-1090 / DSM 15013)).